Reading from the N-terminus, the 519-residue chain is 2,3-bisphosphoglycerate-independent phosphoglycerate mutase (519 aa).

Positions 18 and 68 each coordinate Mn(2+). S68 acts as the Phosphoserine intermediate in catalysis. Residues H129, 159-160, R191, R197, 267-270, and K341 each bind substrate; these read RD and RADR. D408, H412, D449, H450, and H468 together coordinate Mn(2+).

The protein belongs to the BPG-independent phosphoglycerate mutase family. As to quaternary structure, monomer. Mn(2+) is required as a cofactor.

The enzyme catalyses (2R)-2-phosphoglycerate = (2R)-3-phosphoglycerate. It participates in carbohydrate degradation; glycolysis; pyruvate from D-glyceraldehyde 3-phosphate: step 3/5. In terms of biological role, catalyzes the interconversion of 2-phosphoglycerate and 3-phosphoglycerate. This is 2,3-bisphosphoglycerate-independent phosphoglycerate mutase from Coxiella burnetii (strain Dugway 5J108-111).